Consider the following 128-residue polypeptide: Diacylglycerol kinase (128 aa).

Position 34 (Glu34) interacts with a divalent metal cation. The next 2 helical transmembrane spans lie at 35–55 (SAFR…SYLT) and 58–78 (FLEW…ELIN). The Proton acceptor role is filled by Glu75. Position 82 (Glu82) interacts with a divalent metal cation. Residues 108–128 (LIGLIFWAFIWGRYLLTLYFN) form a helical membrane-spanning segment.

Belongs to the bacterial diacylglycerol kinase family. Mg(2+) is required as a cofactor.

Its subcellular location is the cell inner membrane. It carries out the reaction a 1,2-diacyl-sn-glycerol + ATP = a 1,2-diacyl-sn-glycero-3-phosphate + ADP + H(+). In terms of biological role, catalyzes the ATP-dependent phosphorylation of sn-l,2-diacylglycerol (DAG) to phosphatidic acid. Involved in the recycling of diacylglycerol produced as a by-product during membrane-derived oligosaccharide (MDO) biosynthesis. The protein is Diacylglycerol kinase (dgkA) of Helicobacter pylori (strain J99 / ATCC 700824) (Campylobacter pylori J99).